We begin with the raw amino-acid sequence, 513 residues long: Flavonoid 3'-monooxygenase (513 aa).

The chain crosses the membrane as a helical span at residues 1–21 (MATLFLTILLATVLFLILRIF). Topologically, residues 22–513 (SHRRNRSHNN…APNVYGLGSG (492 aa)) are cytoplasmic. Cys-445 lines the heme pocket.

This sequence belongs to the cytochrome P450 family. Heme serves as cofactor. In terms of tissue distribution, high expression in siliques and to a lower extent in stems, flowers and senescing leaves.

The protein resides in the endoplasmic reticulum membrane. It catalyses the reaction a 3'-unsubstituted flavone + reduced [NADPH--hemoprotein reductase] + O2 = a 3'-hydroxyflavone + oxidized [NADPH--hemoprotein reductase] + H2O + H(+). It functions in the pathway secondary metabolite biosynthesis; flavonoid biosynthesis. In terms of biological role, catalyzes the 3'-hydroxylation of the flavonoid B-ring to the 3',4'-hydroxylated state. Convert naringenin to eriodictyol and dihydrokaempferol to dihydroquercetin. This chain is Flavonoid 3'-monooxygenase (CYP75B1), found in Arabidopsis thaliana (Mouse-ear cress).